The sequence spans 421 residues: L-Ala-D/L-amino acid epimerase (421 aa).

Substrate-binding positions include Thr-193 and 218–220 (KLK). The Mg(2+) site is built by Asp-247, Glu-275, and Asp-304. Substrate-binding positions include Lys-328 and 380–382 (DLD).

This sequence belongs to the mandelate racemase/muconate lactonizing enzyme family. Mg(2+) serves as cofactor.

In terms of biological role, catalyzes the epimerization of various hydrophobic and polar dipeptides. Has epimerase activity with L-Ala-L-Ala, L-Ala-L-Ser, L-Ala-L-Thr and L-Ala-L-Trp (in vitro). This is L-Ala-D/L-amino acid epimerase from Populus trichocarpa (Western balsam poplar).